The following is a 189-amino-acid chain: GTP cyclohydrolase 1 (189 aa).

Zn(2+)-binding residues include Cys80, His83, and Cys152.

This sequence belongs to the GTP cyclohydrolase I family. Toroid-shaped homodecamer, composed of two pentamers of five dimers.

It catalyses the reaction GTP + H2O = 7,8-dihydroneopterin 3'-triphosphate + formate + H(+). It functions in the pathway cofactor biosynthesis; 7,8-dihydroneopterin triphosphate biosynthesis; 7,8-dihydroneopterin triphosphate from GTP: step 1/1. The chain is GTP cyclohydrolase 1 from Latilactobacillus sakei subsp. sakei (strain 23K) (Lactobacillus sakei subsp. sakei).